We begin with the raw amino-acid sequence, 232 residues long: 2,3,4,5-tetrahydropyridine-2,6-dicarboxylate N-acetyltransferase (232 aa).

The protein belongs to the transferase hexapeptide repeat family. DapH subfamily.

The catalysed reaction is (S)-2,3,4,5-tetrahydrodipicolinate + acetyl-CoA + H2O = L-2-acetamido-6-oxoheptanedioate + CoA. It functions in the pathway amino-acid biosynthesis; L-lysine biosynthesis via DAP pathway; LL-2,6-diaminopimelate from (S)-tetrahydrodipicolinate (acetylase route): step 1/3. Functionally, catalyzes the transfer of an acetyl group from acetyl-CoA to tetrahydrodipicolinate. In Streptococcus pneumoniae (strain CGSP14), this protein is 2,3,4,5-tetrahydropyridine-2,6-dicarboxylate N-acetyltransferase.